A 156-amino-acid chain; its full sequence is Small ribosomal subunit protein uS7 (156 aa).

The protein belongs to the universal ribosomal protein uS7 family. In terms of assembly, part of the 30S ribosomal subunit. Contacts proteins S9 and S11.

In terms of biological role, one of the primary rRNA binding proteins, it binds directly to 16S rRNA where it nucleates assembly of the head domain of the 30S subunit. Is located at the subunit interface close to the decoding center, probably blocks exit of the E-site tRNA. The protein is Small ribosomal subunit protein uS7 of Bacillus cereus (strain G9842).